We begin with the raw amino-acid sequence, 449 residues long: Biotin carboxylase (449 aa).

A Biotin carboxylation domain is found at 4–448; it reads MIEKVLIANR…NIHYLEKMLG (445 aa). Residues lysine 119, lysine 162, 168-169, 204-207, histidine 212, and histidine 239 each bind ATP; these read GG and EKYL. The region spanning 123–320 is the ATP-grasp domain; the sequence is IAAMKAAGVP…IVKEQILIAA (198 aa). Lysine 241 is a binding site for hydrogencarbonate. 2 residues coordinate ATP: glutamate 279 and glutamate 291. The Mg(2+) site is built by glutamate 279, glutamate 291, and asparagine 293. Positions 279, 291, and 293 each coordinate Mn(2+). Residues arginine 295, valine 298, and arginine 341 each coordinate hydrogencarbonate. Arginine 295 is a catalytic residue. Arginine 341 contributes to the biotin binding site.

As to quaternary structure, acetyl-CoA carboxylase is a heterohexamer of biotin carboxyl carrier protein, biotin carboxylase and the two subunits of carboxyl transferase in a 2:2 complex. The cofactor is Mg(2+). Requires Mn(2+) as cofactor.

The catalysed reaction is N(6)-biotinyl-L-lysyl-[protein] + hydrogencarbonate + ATP = N(6)-carboxybiotinyl-L-lysyl-[protein] + ADP + phosphate + H(+). Its pathway is lipid metabolism; malonyl-CoA biosynthesis; malonyl-CoA from acetyl-CoA: step 1/1. Functionally, this protein is a component of the acetyl coenzyme A carboxylase complex; first, biotin carboxylase catalyzes the carboxylation of the carrier protein and then the transcarboxylase transfers the carboxyl group to form malonyl-CoA. This is Biotin carboxylase (accC) from Allochromatium vinosum (strain ATCC 17899 / DSM 180 / NBRC 103801 / NCIMB 10441 / D) (Chromatium vinosum).